Reading from the N-terminus, the 249-residue chain is Ubiquinone biosynthesis O-methyltransferase (249 aa).

Arg-41, Gly-72, Asp-93, and Met-136 together coordinate S-adenosyl-L-methionine.

The protein belongs to the methyltransferase superfamily. UbiG/COQ3 family.

It catalyses the reaction a 3-demethylubiquinol + S-adenosyl-L-methionine = a ubiquinol + S-adenosyl-L-homocysteine + H(+). The catalysed reaction is a 3-(all-trans-polyprenyl)benzene-1,2-diol + S-adenosyl-L-methionine = a 2-methoxy-6-(all-trans-polyprenyl)phenol + S-adenosyl-L-homocysteine + H(+). The protein operates within cofactor biosynthesis; ubiquinone biosynthesis. In terms of biological role, O-methyltransferase that catalyzes the 2 O-methylation steps in the ubiquinone biosynthetic pathway. This chain is Ubiquinone biosynthesis O-methyltransferase, found in Methylobacterium nodulans (strain LMG 21967 / CNCM I-2342 / ORS 2060).